The sequence spans 339 residues: UPF0324 membrane protein M6_Spy0799 (339 aa).

9 helical membrane-spanning segments follow: residues 7–24 (KLPG…AWYL), 28–50 (FPII…FYEH), 57–79 (GISF…GLNL), 84–106 (AVGM…VAYG), 118–140 (ATLV…APVI), 150–172 (AISV…GQLL), 256–275 (FILF…SLGV), 290–307 (FIVM…LVKL), and 314–336 (AILL…QLSL).

The protein belongs to the UPF0324 family.

It is found in the cell membrane. This is UPF0324 membrane protein M6_Spy0799 from Streptococcus pyogenes serotype M6 (strain ATCC BAA-946 / MGAS10394).